Reading from the N-terminus, the 793-residue chain is Probable phosphoketolase (793 aa).

Belongs to the XFP family. It depends on thiamine diphosphate as a cofactor.

The protein is Probable phosphoketolase of Rhodopirellula baltica (strain DSM 10527 / NCIMB 13988 / SH1).